The primary structure comprises 264 residues: Undecaprenyl-diphosphatase (264 aa).

6 consecutive transmembrane segments (helical) span residues 41-61 (NLAF…VILW), 82-102 (YVIN…FFKD), 106-126 (AIFG…AALL), 140-160 (ISMK…LPGL), 213-233 (IPAL…CLAC), and 244-264 (KLIY…ITQL).

The protein belongs to the UppP family.

It is found in the cell inner membrane. It carries out the reaction di-trans,octa-cis-undecaprenyl diphosphate + H2O = di-trans,octa-cis-undecaprenyl phosphate + phosphate + H(+). Functionally, catalyzes the dephosphorylation of undecaprenyl diphosphate (UPP). Confers resistance to bacitracin. This is Undecaprenyl-diphosphatase from Bacteroides thetaiotaomicron (strain ATCC 29148 / DSM 2079 / JCM 5827 / CCUG 10774 / NCTC 10582 / VPI-5482 / E50).